Consider the following 115-residue polypeptide: MNLERLNEIEKPLLHIVKHDVMPALGCTEPISLALASATAAKYLGKTPERIEAKVSPNLMKNGLGVAVPGTGMVGLPIAAAMKVLSNTILIELLIISVLLHQKVCSISTDRLSKL.

Belongs to the UPF0597 family.

In Haemophilus influenzae (strain ATCC 51907 / DSM 11121 / KW20 / Rd), this protein is UPF0597 protein HI_0855.